Here is a 539-residue protein sequence, read N- to C-terminus: O-phosphoserine--tRNA(Cys) ligase (539 aa).

Residues histidine 188–threonine 190, serine 233–serine 235, tyrosine 275–tyrosine 276, and asparagine 327 contribute to the substrate site.

The protein belongs to the class-II aminoacyl-tRNA synthetase family. O-phosphoseryl-tRNA(Cys) synthetase subfamily. In terms of assembly, homotetramer. Interacts with SepCysS.

It catalyses the reaction tRNA(Cys) + O-phospho-L-serine + ATP = O-phospho-L-seryl-tRNA(Cys) + AMP + diphosphate. Its function is as follows. Catalyzes the attachment of O-phosphoserine (Sep) to tRNA(Cys). In Methanosarcina barkeri (strain Fusaro / DSM 804), this protein is O-phosphoserine--tRNA(Cys) ligase.